The sequence spans 1758 residues: Y' element ATP-dependent helicase YIL177C (1758 aa).

In terms of domain architecture, Helicase ATP-binding spans 668–845; that stretch reads EIYMADTPSV…LQRIGLTGLA (178 aa). Residue 681 to 688 coordinates ATP; that stretch reads APPGYGKT. The Helicase C-terminal domain maps to 900 to 1051; sequence ALKLLLALFE…EFYGLESKKG (152 aa). Over residues 1142-1360 the composition is skewed to low complexity; sequence NVRTNATTNA…ATTTESTNAS (219 aa). Positions 1142–1384 are disordered; the sequence is NVRTNATTNA…RFHPVTDINK (243 aa). Residues 1361 to 1384 show a composition bias toward basic and acidic residues; that stretch reads AKEDANKDGNAEDNRFHPVTDINK.

This sequence belongs to the helicase family. Yeast subtelomeric Y' repeat subfamily.

Its function is as follows. Catalyzes DNA unwinding and is involved in telomerase-independent telomere maintenance. This Saccharomyces cerevisiae (strain ATCC 204508 / S288c) (Baker's yeast) protein is Y' element ATP-dependent helicase YIL177C.